The sequence spans 1086 residues: Isoleucine--tRNA ligase (1086 aa).

The short motif at 53–63 is the 'HIGH' region element; sequence PFANGLPHYGH. The 'KMSKS' region signature appears at 624–628; it reads KLSKR. Lys627 contributes to the ATP binding site.

This sequence belongs to the class-I aminoacyl-tRNA synthetase family. IleS type 2 subfamily. As to quaternary structure, monomer. Requires Zn(2+) as cofactor.

Its subcellular location is the cytoplasm. The enzyme catalyses tRNA(Ile) + L-isoleucine + ATP = L-isoleucyl-tRNA(Ile) + AMP + diphosphate. Catalyzes the attachment of isoleucine to tRNA(Ile). As IleRS can inadvertently accommodate and process structurally similar amino acids such as valine, to avoid such errors it has two additional distinct tRNA(Ile)-dependent editing activities. One activity is designated as 'pretransfer' editing and involves the hydrolysis of activated Val-AMP. The other activity is designated 'posttransfer' editing and involves deacylation of mischarged Val-tRNA(Ile). In Rickettsia prowazekii (strain Madrid E), this protein is Isoleucine--tRNA ligase.